Here is a 216-residue protein sequence, read N- to C-terminus: Small ribosomal subunit protein uS5 (216 aa).

The S5 DRBM domain occupies 51–114; the sequence is LEEEVIDVNL…DDAKFNIIKV (64 aa).

This sequence belongs to the universal ribosomal protein uS5 family. As to quaternary structure, part of the 30S ribosomal subunit. Contacts protein S4.

Its function is as follows. With S4 and S12 plays an important role in translational accuracy. The protein is Small ribosomal subunit protein uS5 of Methanothermobacter thermautotrophicus (strain ATCC 29096 / DSM 1053 / JCM 10044 / NBRC 100330 / Delta H) (Methanobacterium thermoautotrophicum).